The following is a 231-amino-acid chain: ATP phosphoribosyltransferase (231 aa).

It belongs to the ATP phosphoribosyltransferase family. Short subfamily. In terms of assembly, heteromultimer composed of HisG and HisZ subunits.

Its subcellular location is the cytoplasm. It carries out the reaction 1-(5-phospho-beta-D-ribosyl)-ATP + diphosphate = 5-phospho-alpha-D-ribose 1-diphosphate + ATP. Its pathway is amino-acid biosynthesis; L-histidine biosynthesis; L-histidine from 5-phospho-alpha-D-ribose 1-diphosphate: step 1/9. In terms of biological role, catalyzes the condensation of ATP and 5-phosphoribose 1-diphosphate to form N'-(5'-phosphoribosyl)-ATP (PR-ATP). Has a crucial role in the pathway because the rate of histidine biosynthesis seems to be controlled primarily by regulation of HisG enzymatic activity. This is ATP phosphoribosyltransferase (hisG) from Rhizobium etli (strain CIAT 652).